The chain runs to 529 residues: Peptide chain release factor 3 (529 aa).

In terms of domain architecture, tr-type G spans 11–280 (AKRRTFAIIS…GLVEWAPAPM (270 aa)). GTP-binding positions include 20–27 (SHPDAGKT), 88–92 (DTPGH), and 142–145 (NKLD).

Belongs to the TRAFAC class translation factor GTPase superfamily. Classic translation factor GTPase family. PrfC subfamily.

The protein resides in the cytoplasm. Its function is as follows. Increases the formation of ribosomal termination complexes and stimulates activities of RF-1 and RF-2. It binds guanine nucleotides and has strong preference for UGA stop codons. It may interact directly with the ribosome. The stimulation of RF-1 and RF-2 is significantly reduced by GTP and GDP, but not by GMP. The protein is Peptide chain release factor 3 of Yersinia enterocolitica serotype O:8 / biotype 1B (strain NCTC 13174 / 8081).